A 181-amino-acid chain; its full sequence is CDP-archaeol synthase (181 aa).

5 helical membrane-spanning segments follow: residues 7–27 (VVVA…AVLA), 55–75 (AVGT…RPAA), 80–100 (GVVL…GAMV), 128–148 (FVVV…GDTF), and 150–170 (LPVL…TNGI).

It belongs to the CDP-archaeol synthase family. Mg(2+) serves as cofactor.

The protein localises to the cell membrane. The enzyme catalyses 2,3-bis-O-(geranylgeranyl)-sn-glycerol 1-phosphate + CTP + H(+) = CDP-2,3-bis-O-(geranylgeranyl)-sn-glycerol + diphosphate. Its pathway is membrane lipid metabolism; glycerophospholipid metabolism. Catalyzes the formation of CDP-2,3-bis-(O-geranylgeranyl)-sn-glycerol (CDP-archaeol) from 2,3-bis-(O-geranylgeranyl)-sn-glycerol 1-phosphate (DGGGP) and CTP. This reaction is the third ether-bond-formation step in the biosynthesis of archaeal membrane lipids. This chain is CDP-archaeol synthase, found in Halobacterium salinarum (strain ATCC 29341 / DSM 671 / R1).